The sequence spans 329 residues: Alpha-tubulin N-acetyltransferase 1 (329 aa).

One can recognise an N-acetyltransferase domain in the interval 5–185 (SQVALLPKLS…NNFVVFHRYF (181 aa)). Residues 119–132 (FFVDTSFQRKGFGK) and 155–164 (SVKFLAFLQK) each bind acetyl-CoA. 2 disordered regions span residues 218–261 (PKYQ…GVGK) and 306–329 (GARRRMSPTRSGVQYNIISGTPEH). The span at 220-229 (YQSTTGPNNN) shows a compositional bias: polar residues. Over residues 238–249 (TPPPPPLPPPLV) the composition is skewed to pro residues. Over residues 313-329 (PTRSGVQYNIISGTPEH) the composition is skewed to polar residues.

It belongs to the acetyltransferase ATAT1 family.

It catalyses the reaction L-lysyl-[alpha-tubulin] + acetyl-CoA = N(6)-acetyl-L-lysyl-[alpha-tubulin] + CoA + H(+). Specifically acetylates 'Lys-40' in alpha-tubulin on the lumenal side of microtubules. Promotes microtubule destabilization and accelerates microtubule dynamics; this activity may be independent of acetylation activity. Acetylates alpha-tubulin with a slow enzymatic rate, due to a catalytic site that is not optimized for acetyl transfer. Enters the microtubule through each end and diffuses quickly throughout the lumen of microtubules. Acetylates only long/old microtubules because of its slow acetylation rate since it does not have time to act on dynamically unstable microtubules before the enzyme is released. In Trypanosoma cruzi (strain CL Brener), this protein is Alpha-tubulin N-acetyltransferase 1.